We begin with the raw amino-acid sequence, 1487 residues long: Probable lysine-specific demethylase SE14 (1487 aa).

The interval 1–23 is disordered; the sequence is MPPQPPPAASASASAPDPAVPAW. Low complexity predominate over residues 9–22; the sequence is ASASASAPDPAVPA. The JmjN domain occupies 30-71; that stretch reads APEYRPTESEFADPIAFLSRVEREAAAYGICKVIPPHPRPSR. The span at 86-104 shows a compositional bias: low complexity; it reads CDAPAPSPAAASDSSIPPS. A disordered region spans residues 86–113; sequence CDAPAPSPAAASDSSIPPSSSSPPPVSA. The region spanning 232 to 398 is the JmjC domain; sequence NSPWNLQAIA…FAKEAAVRRA (167 aa). Fe cation-binding residues include H275, E277, and H366. Disordered regions lie at residues 494–555 and 684–718; these read SCSK…DDGD and YGDTETPEKKIPSDCPGSELSKQSGRGDVNVPDVE. 2 stretches are compositionally biased toward basic and acidic residues: residues 498 to 507 and 542 to 551; these read APEKKGEDGP and QAPEGEKLDT. The C2H2-type 1; degenerate zinc finger occupies 1377–1400; that stretch reads FQCDIEFCDMTFETKAELRAHQRN. 3 consecutive C2H2-type zinc fingers follow at residues 1400–1424, 1430–1454, and 1460–1486; these read NICTDESCGKRFSSHKYLKRHQCVH, FKCPWDGCPMTFKWLWAQTEHIRVH, and YKCSAPDCGQSFRYVSDYSRHRKKFNH.

Fe(2+) is required as a cofactor.

The protein resides in the nucleus. Functionally, histone demethylase that demethylates 'Lys-4' (H3K4me) of histone H3. Involved in the control of flowering time. Has a suppressive effect on floral transition under long day conditions through the demethylation of H3K4me3 in the promoter region of the flower-promoting signal HD3B/RFT1. In Oryza sativa subsp. japonica (Rice), this protein is Probable lysine-specific demethylase SE14 (SE14).